Consider the following 177-residue polypeptide: Large ribosomal subunit protein uL6 (177 aa).

The protein belongs to the universal ribosomal protein uL6 family. Part of the 50S ribosomal subunit.

Functionally, this protein binds to the 23S rRNA, and is important in its secondary structure. It is located near the subunit interface in the base of the L7/L12 stalk, and near the tRNA binding site of the peptidyltransferase center. The sequence is that of Large ribosomal subunit protein uL6 from Vibrio campbellii (strain ATCC BAA-1116).